The chain runs to 515 residues: Germ cell-less protein-like 1 (515 aa).

The disordered stretch occupies residues Met1–Gly35. The segment covering Gln11–Ala29 has biased composition (low complexity). A Nuclear localization signal motif is present at residues Ser49–Ser55. The disordered stretch occupies residues Asp65–Pro85. The residue at position 66 (Ser66) is a Phosphoserine. Over residues Glu67–Asp76 the composition is skewed to acidic residues. Phosphothreonine is present on Thr68. Positions Pro85–Lys91 match the Nuclear localization signal motif. Residues Ser108 to Pro178 enclose the BTB domain.

Interacts with TMPO-beta, TSG101 and TFDP2. Interacts with EMD.

The protein localises to the nucleus matrix. Functionally, possible function in spermatogenesis. Enhances the degradation of MDM2 and increases the amount of p53 probably by modulating the nucleocytoplasmic transport. This is Germ cell-less protein-like 1 (GMCL1) from Homo sapiens (Human).